The following is a 193-amino-acid chain: Putative manganese efflux pump MntP (193 aa).

6 helical membrane passes run 3–23, 39–59, 65–85, 113–133, 138–158, and 173–193; these read LATL…AALG, VGAY…ALGL, IAAF…GHMV, LALA…GLAV, ILMA…GGVL, and VLGG…HLSA.

This sequence belongs to the MntP (TC 9.B.29) family.

The protein resides in the cell inner membrane. Its function is as follows. Probably functions as a manganese efflux pump. The protein is Putative manganese efflux pump MntP of Rhodospirillum rubrum (strain ATCC 11170 / ATH 1.1.1 / DSM 467 / LMG 4362 / NCIMB 8255 / S1).